The primary structure comprises 182 residues: Auxin-responsive protein IAA9 (182 aa).

Residues 1–41 (MELELGLAPPNSGHLVVDELSSSSSSGGGSGSAPVSASSAG) form a disordered region. Positions 3–7 (LELGL) match the EAR-like (transcriptional repression) motif. Positions 32–41 (SAPVSASSAG) are enriched in low complexity. Positions 92–182 (ANYVKVKKEG…RSVKRLKILG (91 aa)) constitute a PB1 domain.

This sequence belongs to the Aux/IAA family. In terms of assembly, homodimers and heterodimers. Expressed in etiolated shoots and flowers.

The protein localises to the nucleus. Functionally, aux/IAA proteins are short-lived transcriptional factors that function as repressors of early auxin response genes at low auxin concentrations. The protein is Auxin-responsive protein IAA9 (IAA9) of Oryza sativa subsp. japonica (Rice).